Here is a 1228-residue protein sequence, read N- to C-terminus: DNA-directed RNA polymerase subunit beta (1228 aa).

It belongs to the RNA polymerase beta chain family. As to quaternary structure, the RNAP catalytic core consists of 2 alpha, 1 beta, 1 beta' and 1 omega subunit. When a sigma factor is associated with the core the holoenzyme is formed, which can initiate transcription.

It carries out the reaction RNA(n) + a ribonucleoside 5'-triphosphate = RNA(n+1) + diphosphate. Functionally, DNA-dependent RNA polymerase catalyzes the transcription of DNA into RNA using the four ribonucleoside triphosphates as substrates. The protein is DNA-directed RNA polymerase subunit beta of Leptospira biflexa.